The following is a 151-amino-acid chain: Transcriptional repressor NrdR (151 aa).

The segment at 3–34 is a zinc-finger region; it reads CPYCAYGESKVVDSRSTEDGSSIRRRRECLKC. Positions 49-139 constitute an ATP-cone domain; the sequence is ILVIKKNMSR…VYRQFKDINT (91 aa).

The protein belongs to the NrdR family. Zn(2+) serves as cofactor.

Negatively regulates transcription of bacterial ribonucleotide reductase nrd genes and operons by binding to NrdR-boxes. The polypeptide is Transcriptional repressor NrdR (Clostridium botulinum (strain Loch Maree / Type A3)).